Reading from the N-terminus, the 152-residue chain is Endodeoxyribonuclease 1 (152 aa).

It catalyses the reaction Endonucleolytic cleavage to 5'-phosphooligonucleotide end-products.. Its function is as follows. Endodeoxyribonuclease I, which is expressed in the late stage, is necessary for T3 genetic recombination and the breakdown of host DNA. In the early stage of infection, T3 DNA replicates as a linear monomer. In the late stage, the T3 DNA replicates via linear concatemers several genomes in length. The gene 3 product has also been implicated in the maturation of these concatemers. The chain is Endodeoxyribonuclease 1 (3) from Enterobacteria phage T3 (Bacteriophage T3).